A 366-amino-acid chain; its full sequence is GDSL esterase/lipase At1g74460 (366 aa).

Residues 1 to 20 form the signal peptide; the sequence is MKFCAIFVLFIVLAINGYDC. Residue serine 30 is the Nucleophile of the active site. N-linked (GlcNAc...) asparagine glycans are attached at residues asparagine 113 and asparagine 260. Catalysis depends on residues aspartate 320 and histidine 323.

This sequence belongs to the 'GDSL' lipolytic enzyme family.

The protein localises to the secreted. In Arabidopsis thaliana (Mouse-ear cress), this protein is GDSL esterase/lipase At1g74460.